Here is a 449-residue protein sequence, read N- to C-terminus: MQATDFKNKKVMVFGWARSGKAAAQLLTKLGSKVTVVNGGEFDAQDATYRSLLAADVTLIGTDNAETLDSTYDYLIKNPGINYDHPLVQKAEKLNIPILTEVEIALSTFNGRLIAVTGSNGKTTTTSLIRDMLKADGQNVITAGNIGVPVSEVVFDLTREDTLLLELSSFQLLGLPDIQPDIALVTNIFSNHLDYHKTRANYVAAKFRITRHQNANQYLVLNADGQDTEKFKNETEAQVLEFSRTKQHFPVAFSNGNLTLTDEIVMPTKDIKLVGPHNQENILAAVTVANLAGVSKPAIREVLKTFSGVAHRLQYLFTAGDVKYYNDSKATDIEATQTALDSFDCPTIWIGGGLERGDDLERLLPNLKNVKAVIAVGETQQKIVTLAREAGKPVIAVTDVEHAAPVAVQLASPGDVVLLSPAQASWDQYSSFEERGDNFVASLKETLNS.

Residue glycine 118–threonine 124 coordinates ATP.

Belongs to the MurCDEF family.

The protein localises to the cytoplasm. It carries out the reaction UDP-N-acetyl-alpha-D-muramoyl-L-alanine + D-glutamate + ATP = UDP-N-acetyl-alpha-D-muramoyl-L-alanyl-D-glutamate + ADP + phosphate + H(+). Its pathway is cell wall biogenesis; peptidoglycan biosynthesis. In terms of biological role, cell wall formation. Catalyzes the addition of glutamate to the nucleotide precursor UDP-N-acetylmuramoyl-L-alanine (UMA). The protein is UDP-N-acetylmuramoylalanine--D-glutamate ligase of Leuconostoc mesenteroides subsp. mesenteroides (strain ATCC 8293 / DSM 20343 / BCRC 11652 / CCM 1803 / JCM 6124 / NCDO 523 / NBRC 100496 / NCIMB 8023 / NCTC 12954 / NRRL B-1118 / 37Y).